Here is a 579-residue protein sequence, read N- to C-terminus: Alpha-glucosidase (579 aa).

Residue aspartate 212 is the Nucleophile of the active site. The Proton donor role is filled by glutamate 269.

This sequence belongs to the glycosyl hydrolase 13 family.

The enzyme catalyses Hydrolysis of terminal, non-reducing (1-&gt;4)-linked alpha-D-glucose residues with release of alpha-D-glucose.. The protein is Alpha-glucosidase (mal1) of Schizosaccharomyces pombe (strain 972 / ATCC 24843) (Fission yeast).